Consider the following 282-residue polypeptide: Snake venom serine protease NaSP (282 aa).

The first 18 residues, Met1–Ser18, serve as a signal peptide directing secretion. Positions Lys19–Leu56 are excised as a propeptide. Asn41 and Asn45 each carry an N-linked (GlcNAc...) asparagine glycan. The region spanning Ile57–Ala280 is the Peptidase S1 domain. Intrachain disulfides connect Cys63/Cys195, Cys82/Cys98, Cys174/Cys241, Cys206/Cys220, and Cys231/Cys256. Residue His97 is the Charge relay system of the active site. Residue Asn135 is glycosylated (N-linked (GlcNAc...) asparagine). Asp142 (charge relay system) is an active-site residue. Residues Asn149 and Asn153 are each glycosylated (N-linked (GlcNAc...) asparagine). Ser235 (charge relay system) is an active-site residue.

This sequence belongs to the peptidase S1 family. Snake venom subfamily. Monomer. As to expression, expressed by the venom gland.

It localises to the secreted. Its function is as follows. Snake venom serine protease that may act in the hemostasis system of the prey. The protein is Snake venom serine protease NaSP of Naja atra (Chinese cobra).